A 487-amino-acid polypeptide reads, in one-letter code: FAD-dependent oxidoreductase domain-containing protein 1 (487 aa).

The chain crosses the membrane as a helical span at residues 62–82 (EQADVVIIGGGILGLSVAFWL).

In terms of assembly, associates with components of the mitochondrial respiratory chain complex I. Requires FAD as cofactor.

It localises to the mitochondrion inner membrane. Required for the assembly of the mitochondrial membrane respiratory chain NADH dehydrogenase (Complex I). Involved in mid-late stages of complex I assembly. The polypeptide is FAD-dependent oxidoreductase domain-containing protein 1 (Foxred1) (Mus musculus (Mouse)).